The sequence spans 1451 residues: Cleavage and polyadenylation specificity factor subunit 1 (1451 aa).

Basic and acidic residues-rich tracts occupy residues 401–422 (QETP…EPPN) and 561–572 (EEKREPTIEDDK). Disordered regions lie at residues 401 to 432 (QETP…SNWA), 548 to 572 (EKPS…EDDK), and 753 to 789 (GESN…RQEP). The short motif at 901 to 916 (KKMPHNINYREKKVKV) is the Nuclear localization signal element.

It belongs to the CPSF1 family.

Its subcellular location is the nucleus. It is found in the nucleoplasm. Its function is as follows. Component of the cleavage and polyadenylation specificity factor (CPSF) complex that plays a key role in pre-mRNA 3'-end formation, recognizing the AAUAAA signal sequence and interacting with poly(A) polymerase and other factors to bring about cleavage and poly(A) addition. This subunit is involved in the RNA recognition step of the polyadenylation reaction. Plays a role in eye morphogenesis and the development of retinal ganglion cell projections to the tectum. The chain is Cleavage and polyadenylation specificity factor subunit 1 (cpsf1) from Danio rerio (Zebrafish).